A 245-amino-acid polypeptide reads, in one-letter code: UDP-N-acetyl-D-mannosaminuronic acid transferase (245 aa).

This sequence belongs to the glycosyltransferase 26 family.

The enzyme catalyses UDP-N-acetyl-alpha-D-mannosaminouronate + N-acetyl-alpha-D-glucosaminyl-di-trans,octa-cis-undecaprenyl diphosphate = beta-D-ManNAcA-(1-&gt;4)-alpha-D-GlcNAc-di-trans,octa-cis-undecaprenyl diphosphate + UDP + H(+). The protein operates within bacterial outer membrane biogenesis; enterobacterial common antigen biosynthesis. In terms of biological role, catalyzes the synthesis of Und-PP-GlcNAc-ManNAcA (Lipid II), the second lipid-linked intermediate involved in enterobacterial common antigen (ECA) synthesis. The protein is UDP-N-acetyl-D-mannosaminuronic acid transferase of Proteus mirabilis (strain HI4320).